Here is a 54-residue protein sequence, read N- to C-terminus: Large ribosomal subunit protein bL33B (54 aa).

Belongs to the bacterial ribosomal protein bL33 family.

In Mycolicibacterium smegmatis (strain ATCC 700084 / mc(2)155) (Mycobacterium smegmatis), this protein is Large ribosomal subunit protein bL33B.